Reading from the N-terminus, the 634-residue chain is Zinc finger and BTB domain-containing protein 22 (634 aa).

The 65-residue stretch at 57–121 (CDVSIRVQGR…AYTGRLSMAA (65 aa)) folds into the BTB domain. Disordered regions lie at residues 167 to 247 (TVPG…APVV) and 308 to 461 (APTP…GTSV). The span at 180 to 198 (TVAPATMGSARSHASSRAS) shows a compositional bias: low complexity. Polar residues predominate over residues 199-209 (ENQSPSSSNYF). Ser202 carries the post-translational modification Phosphoserine. The segment covering 217–229 (FSSSSQEAFAASA) has biased composition (low complexity). The segment covering 317 to 340 (PDLEEEEEEEDLVLTCEDDEDEEL) has biased composition (acidic residues). Positions 452 to 461 (GAVTVGGTSV) are enriched in low complexity. Residues 486-507 (FLCHCGKAFSHKSMRDRHVNMH) form a C2H2-type 1; atypical zinc finger. 2 consecutive C2H2-type zinc fingers follow at residues 513 to 535 (FDCP…MKTH) and 541 to 562 (YECG…HRGH). Positions 568-634 (RLGGVGAVPG…MGFGGGGGAN (67 aa)) are disordered. Residues 608-618 (PPSSRRVWSPP) show a composition bias toward low complexity.

It belongs to the krueppel C2H2-type zinc-finger protein family.

The protein localises to the nucleus. May be involved in transcriptional regulation. This Homo sapiens (Human) protein is Zinc finger and BTB domain-containing protein 22 (ZBTB22).